The chain runs to 78 residues: Acyl carrier protein (78 aa).

A Carrier domain is found at 4–78; sequence AEIRDKVYDI…QQAIDYIVKK (75 aa). Position 39 is an O-(pantetheine 4'-phosphoryl)serine (S39).

Belongs to the acyl carrier protein (ACP) family. 4'-phosphopantetheine is transferred from CoA to a specific serine of apo-ACP by AcpS. This modification is essential for activity because fatty acids are bound in thioester linkage to the sulfhydryl of the prosthetic group.

It is found in the cytoplasm. The protein operates within lipid metabolism; fatty acid biosynthesis. Functionally, carrier of the growing fatty acid chain in fatty acid biosynthesis. In Chlorobium luteolum (strain DSM 273 / BCRC 81028 / 2530) (Pelodictyon luteolum), this protein is Acyl carrier protein.